Consider the following 411-residue polypeptide: GTPase Obg (411 aa).

Positions Met1–Leu157 constitute an Obg domain. Residues Ala20–Val45 form a disordered region. A compositionally biased stretch (gly residues) spans Gly33–Gly43. The 173-residue stretch at Ser158–Arg330 folds into the OBG-type G domain. Residues Gly164–Ser171, Phe189–Thr193, Asp212–Gly215, Asn276–Asp279, and Ala311–Leu313 each bind GTP. Mg(2+) is bound by residues Ser171 and Thr191. The OCT domain maps to Val335–Arg411.

Belongs to the TRAFAC class OBG-HflX-like GTPase superfamily. OBG GTPase family. Monomer. It depends on Mg(2+) as a cofactor.

It localises to the cytoplasm. Its function is as follows. An essential GTPase which binds GTP, GDP and possibly (p)ppGpp with moderate affinity, with high nucleotide exchange rates and a fairly low GTP hydrolysis rate. Plays a role in control of the cell cycle, stress response, ribosome biogenesis and in those bacteria that undergo differentiation, in morphogenesis control. The protein is GTPase Obg of Rubrobacter xylanophilus (strain DSM 9941 / JCM 11954 / NBRC 16129 / PRD-1).